A 217-amino-acid polypeptide reads, in one-letter code: ATP phosphoribosyltransferase (217 aa).

This sequence belongs to the ATP phosphoribosyltransferase family. Short subfamily. Heteromultimer composed of HisG and HisZ subunits.

It localises to the cytoplasm. The catalysed reaction is 1-(5-phospho-beta-D-ribosyl)-ATP + diphosphate = 5-phospho-alpha-D-ribose 1-diphosphate + ATP. It participates in amino-acid biosynthesis; L-histidine biosynthesis; L-histidine from 5-phospho-alpha-D-ribose 1-diphosphate: step 1/9. Functionally, catalyzes the condensation of ATP and 5-phosphoribose 1-diphosphate to form N'-(5'-phosphoribosyl)-ATP (PR-ATP). Has a crucial role in the pathway because the rate of histidine biosynthesis seems to be controlled primarily by regulation of HisG enzymatic activity. The protein is ATP phosphoribosyltransferase of Synechococcus sp. (strain WH7803).